A 282-amino-acid chain; its full sequence is Type 1 encapsulin shell protein (282 aa).

This sequence belongs to the encapsulin family. Family 1 subfamily. Initially thought to form a 180 subunit shell. Forms hollow shells composed of 240 subunits, making a shell about 42-43 nm in diameter. The monomer is capable of assuming 4 different conformations which allows packaging into the icosahedron. The shell has 12 pentameric and 30 hexameric capsomers which form the vertices and faces of the icosahedral nanocompartment.

Its subcellular location is the encapsulin nanocompartment. Functionally, shell component of a type 1 encapsulin nanocompartment. Assembles into proteinaceous icosahedral shells 42-43 nm in diameter with an iron- and phosphorus-rich core (1Fe:1.1P) which can store over 23,000-35,000 iron atoms (with a calculated maximum of 83,000 Fe). There are 2 types of negatively charged open pores in the cryo-electron structure; a 3-fold pore where 3 hexamers meet with a minimal size of 7.2 Angstroms and a 5-fold pore where pentamers meet with a minimal size of 2.3 Angstroms. The 2-fold pore seen in other encapsulin nanocompartments is closed. Empty compartments can be generated in E.coli. Both types of pore have extra density in their centers in the structure. 2 different cargo proteins have been identified (IMEF and Fer); when both are expressed in E.coli with the shell protein only IMEF is detected within the nanocompartment. E.coli expressing all 3 genes stores the largest amount of iron and is protected from Fe/H2O2-induced oxidative stress. Part of the iron-mineralizing encapsulin-associated Firmicute (IMEF) system. In Bacillus thermotolerans (Quasibacillus thermotolerans), this protein is Type 1 encapsulin shell protein.